We begin with the raw amino-acid sequence, 404 residues long: MSMAEDLHLEEQRPERMTLSIGPHHPATHGVLRVKLELEGETVVKAEPETGFLHTGIEKTAEHLTWNQATTVMDRMDYLSPISNNTGYVMAVEKLLGIEDRIPEKARVTRVILLELNRVASHLVGLGTGGLDYGNIGTPIFWAFELRDRILDIFEHTTGQRMNPSYMRVGGLAYDLPHNFKEMVEDFLKVAPGRIQELKDVMLHNPIFVDRAKGVSVITYEQALRYGLTGRNLRVTGSDYDVRKYYPYLGYENYDFKVPVYTDGDSWSRVAITFDEMFESLKIIRQALDNLPWDDRYIIDDRKLVLPPKQEVKHSMEALIHHFKLVHHGFDVPAGEVYVSIESPRGEIGFYVVSDGGNKPMRVRVRPPSFYAVYSLPVLLEGHLLSDMVGAIATIDPVFGEVDR.

Belongs to the complex I 49 kDa subunit family. In terms of assembly, NDH-1 is composed of 14 different subunits. Subunits NuoB, C, D, E, F, and G constitute the peripheral sector of the complex.

The protein localises to the cell membrane. It carries out the reaction a quinone + NADH + 5 H(+)(in) = a quinol + NAD(+) + 4 H(+)(out). Functionally, NDH-1 shuttles electrons from NADH, via FMN and iron-sulfur (Fe-S) centers, to quinones in the respiratory chain. The immediate electron acceptor for the enzyme in this species is believed to be a menaquinone. Couples the redox reaction to proton translocation (for every two electrons transferred, four hydrogen ions are translocated across the cytoplasmic membrane), and thus conserves the redox energy in a proton gradient. In Symbiobacterium thermophilum (strain DSM 24528 / JCM 14929 / IAM 14863 / T), this protein is NADH-quinone oxidoreductase subunit D 1.